The sequence spans 238 residues: Transcriptional activator HAC1 (238 aa).

Positions 1–39 (MEMTDFELTSNSQSNLAIPTNFKSTLPPRKRAKTKEEKE) are disordered. The segment covering 7 to 24 (ELTSNSQSNLAIPTNFKS) has biased composition (polar residues). In terms of domain architecture, bZIP spans 39-102 (EQRRIERILR…LTCSHDAFVA (64 aa)). The interval 41–61 (RRIERILRNRRAAHQSREKKR) is basic motif. The interval 67-74 (LERKCSLL) is leucine-zipper. Residues 115 to 152 (GASLDTRASSHSSSDTFTPSPLNCTMEPATLSPKSMRD) are disordered. A compositionally biased stretch (low complexity) spans 117-134 (SLDTRASSHSSSDTFTPS).

Belongs to the bZIP family. Homodimer.

It is found in the nucleus. Its function is as follows. Transcriptional activator involved in the unfolded protein response (UPR) pathway. Recognizes and binds to the UPR element (UPRE) in the promoter of UPR-regulated genes such as KAR2, PDI1, EUG1 and FKB2. Increases the synthesis of endoplasmic reticulum-resident proteins required for protein folding as well as components of the secretory pathway. The protein is Transcriptional activator HAC1 (HAC1) of Saccharomyces cerevisiae (strain ATCC 204508 / S288c) (Baker's yeast).